The chain runs to 274 residues: 4-hydroxy-3-methylbut-2-enyl diphosphate reductase (274 aa).

Cysteine 12 contributes to the [4Fe-4S] cluster binding site. Histidine 36 and histidine 70 together coordinate (2E)-4-hydroxy-3-methylbut-2-enyl diphosphate. Histidine 36 and histidine 70 together coordinate dimethylallyl diphosphate. The isopentenyl diphosphate site is built by histidine 36 and histidine 70. Cysteine 92 contacts [4Fe-4S] cluster. Histidine 120 lines the (2E)-4-hydroxy-3-methylbut-2-enyl diphosphate pocket. Histidine 120 is a dimethylallyl diphosphate binding site. Histidine 120 lines the isopentenyl diphosphate pocket. Residue glutamate 122 is the Proton donor of the active site. Threonine 158 lines the (2E)-4-hydroxy-3-methylbut-2-enyl diphosphate pocket. Cysteine 186 provides a ligand contact to [4Fe-4S] cluster. Residues serine 214, serine 215, asparagine 216, and serine 258 each contribute to the (2E)-4-hydroxy-3-methylbut-2-enyl diphosphate site. Residues serine 214, serine 215, asparagine 216, and serine 258 each coordinate dimethylallyl diphosphate. The isopentenyl diphosphate site is built by serine 214, serine 215, asparagine 216, and serine 258.

The protein belongs to the IspH family. It depends on [4Fe-4S] cluster as a cofactor.

It catalyses the reaction isopentenyl diphosphate + 2 oxidized [2Fe-2S]-[ferredoxin] + H2O = (2E)-4-hydroxy-3-methylbut-2-enyl diphosphate + 2 reduced [2Fe-2S]-[ferredoxin] + 2 H(+). The catalysed reaction is dimethylallyl diphosphate + 2 oxidized [2Fe-2S]-[ferredoxin] + H2O = (2E)-4-hydroxy-3-methylbut-2-enyl diphosphate + 2 reduced [2Fe-2S]-[ferredoxin] + 2 H(+). Its pathway is isoprenoid biosynthesis; dimethylallyl diphosphate biosynthesis; dimethylallyl diphosphate from (2E)-4-hydroxy-3-methylbutenyl diphosphate: step 1/1. It functions in the pathway isoprenoid biosynthesis; isopentenyl diphosphate biosynthesis via DXP pathway; isopentenyl diphosphate from 1-deoxy-D-xylulose 5-phosphate: step 6/6. In terms of biological role, catalyzes the conversion of 1-hydroxy-2-methyl-2-(E)-butenyl 4-diphosphate (HMBPP) into a mixture of isopentenyl diphosphate (IPP) and dimethylallyl diphosphate (DMAPP). Acts in the terminal step of the DOXP/MEP pathway for isoprenoid precursor biosynthesis. The protein is 4-hydroxy-3-methylbut-2-enyl diphosphate reductase of Campylobacter curvus (strain 525.92).